The chain runs to 760 residues: MQAKKRYILVFVSCAFLAYAYFGGYRLKVSPLRPRRAQHESAKDGGVQPHEQLPSFLGAHDMQELQLLQSNQSKSLDSSKHLVTRKPDCRMETCFDFTRCYDRFLVYIYPPEPLNSLGAAPPTSANYQKILTAIQESRYYTSDPTAACLFVLGIDTLDRDSLSEDYVRNVPSRLARLPYWNNGRNHIIFNLYSGTWPDYAENSLGFDAGEAILAKASMGVLQLRHGFDVSIPLFHKQFPLRAGATGTVQSNNFPANKKYLLAFKGKRYVHGIGSETRNSLFHLHNGRDMVLVTTCRHGKSWRELQDNRCDEDNREYDRYDYETLLQNSTFCLVPRGRRLGSFRFLEALQAGCIPVLLSNAWVLPFESKIDWKQAAIWADERLLLQVPDIVRSIPAERIFALRQQTQVLWERYFGSIEKIVFTTFEIIRERLPDYPVRSSLVWNSSPGALLTLPTFADSSRYMPFLLNSMGAEPRHNYTAVIYVQIGAALGPNAALYKLVRTITKSQFVERILVLWAADRPLPLKKRWPPTSHIPLHVISLGGSTRSQGAGPTSQTTEGRPSISQRFLPYDEIQTDAVLSLDEDAILNTDELDFAYTVWRDFPERIVGYPARAHFWDDSKNAWGYTSKWTNYYSIVLTGAAFYHRYYNYLYTNWLSLLLLKTVQQSSNCEDILMNLLVSHVTRKPPIKVTQRKGYKDRETGRSPWNDPDHFIQRQSCLNTFAAVFGYMPLIRSNLRMDPMLYRDPVSNLRKKYRQIELVGS.

Over 1–6 (MQAKKR) the chain is Cytoplasmic. The helical; Signal-anchor for type II membrane protein transmembrane segment at 7–25 (YILVFVSCAFLAYAYFGGY) threads the bilayer. Topologically, residues 26 to 760 (RLKVSPLRPR…KYRQIELVGS (735 aa)) are lumenal. 2 N-linked (GlcNAc...) asparagine glycosylation sites follow: N71 and N327. R437 contacts UDP-N-acetyl-alpha-D-glucosamine. Residue N476 is glycosylated (N-linked (GlcNAc...) asparagine). A disordered region spans residues 540-560 (LGGSTRSQGAGPTSQTTEGRP). The span at 541-560 (GGSTRSQGAGPTSQTTEGRP) shows a compositional bias: polar residues. UDP-N-acetyl-alpha-D-glucosamine-binding residues include R565, D581, E582, D583, E669, D670, and R713. Mn(2+) is bound at residue D583. A disulfide bridge connects residues C668 and C716. The active site involves D670.

This sequence belongs to the glycosyltransferase 47 family. Interacts with sau. Mn(2+) serves as cofactor. Ubiquitously expressed in early embryos. Later (in stage 10 embryos), it is expressed at higher level in the nervous system. Ubiquitously expressed in wing imaginal disk.

Its subcellular location is the endoplasmic reticulum membrane. It is found in the golgi apparatus membrane. It catalyses the reaction 3-O-{[(1-&gt;4)-beta-D-GlcA-(1-&gt;4)-alpha-D-GlcNAc](n)-(1-&gt;4)-beta-D-GlcA-(1-&gt;3)-beta-D-Gal-(1-&gt;3)-beta-D-Gal-(1-&gt;4)-beta-D-Xyl}-L-seryl-[protein] + UDP-N-acetyl-alpha-D-glucosamine = 3-O-{alpha-D-GlcNAc-[(1-&gt;4)-beta-D-GlcA-(1-&gt;4)-alpha-D-GlcNAc](n)-(1-&gt;4)-beta-D-GlcA-(1-&gt;3)-beta-D-Gal-(1-&gt;3)-beta-D-Gal-(1-&gt;4)-beta-D-Xyl}-L-seryl-[protein] + UDP + H(+). The catalysed reaction is 3-O-{alpha-D-GlcNAc-[(1-&gt;4)-beta-D-GlcA-(1-&gt;4)-alpha-D-GlcNAc](n)-(1-&gt;4)-beta-D-GlcA-(1-&gt;3)-beta-D-Gal-(1-&gt;3)-beta-D-Gal-(1-&gt;4)-beta-D-Xyl}-L-seryl-[protein] + UDP-alpha-D-glucuronate = 3-O-{[(1-&gt;4)-beta-D-GlcA-(1-&gt;4)-alpha-D-GlcNAc](n+1)-(1-&gt;4)-beta-D-GlcA-(1-&gt;3)-beta-D-Gal-(1-&gt;3)-beta-D-Gal-(1-&gt;4)-beta-D-Xyl}-L-seryl-[protein] + UDP + H(+). Its pathway is protein modification; protein glycosylation. It participates in glycan metabolism; heparan sulfate biosynthesis. The protein operates within glycan metabolism; heparin biosynthesis. Functionally, glycosyltransferase required for the biosynthesis of heparan-sulfate and responsible for the alternating addition of beta-1-4-linked glucuronic acid (GlcA) and alpha-1-4-linked N-acetylglucosamine (GlcNAc) units to nascent heparan sulfate chains. Botv is the trigger of heparan sulfate chain initiation and polymerization takes place by a complex of ttv and sotv. Plays a central role in the diffusion of morphogens hedgehog (hh), wingless (wg) and decapentaplegic (dpp) via its role in heparan sulfate proteoglycans (HSPGs) biosynthesis which are required for movement of hh, dpp and wg morphogens. This chain is Exostosin-1 (ttv), found in Drosophila melanogaster (Fruit fly).